We begin with the raw amino-acid sequence, 266 residues long: Undecaprenyl-diphosphatase (266 aa).

8 helical membrane passes run 1–21, 43–63, 81–101, 107–127, 145–165, 183–203, 219–239, and 245–265; these read MMSW…TEFL, ASVF…VIYW, LYGI…GFLF, TLFT…FMLI, LTPK…WPGF, HLAA…ATGY, LFIT…KVFI, and ISLR…YLCI.

The protein belongs to the UppP family.

It is found in the cell membrane. The catalysed reaction is di-trans,octa-cis-undecaprenyl diphosphate + H2O = di-trans,octa-cis-undecaprenyl phosphate + phosphate + H(+). Functionally, catalyzes the dephosphorylation of undecaprenyl diphosphate (UPP). Confers resistance to bacitracin. The sequence is that of Undecaprenyl-diphosphatase from Lawsonia intracellularis (strain PHE/MN1-00).